The sequence spans 107 residues: Large ribosomal subunit protein uL24 (107 aa).

Belongs to the universal ribosomal protein uL24 family. In terms of assembly, part of the 50S ribosomal subunit.

In terms of biological role, one of two assembly initiator proteins, it binds directly to the 5'-end of the 23S rRNA, where it nucleates assembly of the 50S subunit. Its function is as follows. One of the proteins that surrounds the polypeptide exit tunnel on the outside of the subunit. This is Large ribosomal subunit protein uL24 from Pelotomaculum thermopropionicum (strain DSM 13744 / JCM 10971 / SI).